An 854-amino-acid polypeptide reads, in one-letter code: Patatin-like phospholipase domain-containing protein CHGG_02900 (854 aa).

Disordered stretches follow at residues methionine 1–proline 29, leucine 58–serine 138, and glutamine 159–aspartate 186. A compositionally biased stretch (basic and acidic residues) spans aspartate 96–arginine 116. Positions proline 119–threonine 132 are enriched in low complexity. A helical membrane pass occupies residues tryptophan 199–alanine 219. One can recognise a PNPLA domain in the interval leucine 387–asparagine 578. Residues glycine 418–glycine 422 carry the GXSXG motif. The Nucleophile role is filled by serine 420. Aspartate 565 acts as the Proton acceptor in catalysis. Disordered stretches follow at residues arginine 724–serine 776 and arginine 791–glycine 830. Residues glycine 729 to glutamine 751 show a composition bias toward gly residues. The span at alanine 752 to glycine 761 shows a compositional bias: low complexity. The segment covering threonine 799–phenylalanine 812 has biased composition (acidic residues).

Belongs to the PLPL family.

Its subcellular location is the membrane. Functionally, probable lipid hydrolase. The protein is Patatin-like phospholipase domain-containing protein CHGG_02900 of Chaetomium globosum (strain ATCC 6205 / CBS 148.51 / DSM 1962 / NBRC 6347 / NRRL 1970) (Soil fungus).